A 188-amino-acid chain; its full sequence is C-type lectin domain family 5 member A (188 aa).

The Cytoplasmic segment spans residues 1–4; sequence MNWH. A helical; Signal-anchor for type II membrane protein membrane pass occupies residues 5 to 27; it reads MIISGLIVVVLKVVGMTLFLLYF. Topologically, residues 28–188 are extracellular; it reads PQIFNKSNDG…YRRICEKNAK (161 aa). Residue Asn-32 is glycosylated (N-linked (GlcNAc...) asparagine). Cys-71 and Cys-82 are disulfide-bonded. Residues 78–184 form the C-type lectin domain; the sequence is YQARCFFLST…CDISYRRICE (107 aa). 3 N-linked (GlcNAc...) asparagine glycosylation sites follow: Asn-93, Asn-144, and Asn-151. Disulfide bonds link Cys-99/Cys-183 and Cys-161/Cys-175.

Monomer. Homodimer. The majority of CLEC5A is expressed as a monomeric form on macrophages. Interacts with TYROBP/DAP12. The interaction with TYROBP is required for CLEC5A cell surface expression. Interacts with HCST/DAP10. Forms a CLEC5A/TYROBP/HCST trimolecular complex depending almost solely on TYROBP. As to quaternary structure, (Microbial infection) Interacts with dengue virus envelope protein E. In terms of processing, N-glycosylated. Contains sialic acid residues. As to expression, highly expressed in bone marrow with lower levels in synovium, lung and bronchus. Expressed in peripheral blood monocytes and in the monocyte/macrophage cell lines U-937 and Mono-Mac-6, but not in cell lines of other origins. Expression is down-regulated when monocytes differentiate into dendritic cells.

Its subcellular location is the cell membrane. Its function is as follows. Functions as a positive regulator of osteoclastogenesis. Cell surface receptor that signals via TYROBP. Regulates inflammatory responses. (Microbial infection) Critical macrophage receptor for dengue virus serotypes 1-4. The binding of dengue virus to CLEC5A triggers signaling through the phosphorylation of TYROBP. This interaction does not result in viral entry, but stimulates pro-inflammatory cytokine release. The protein is C-type lectin domain family 5 member A (CLEC5A) of Homo sapiens (Human).